Here is a 195-residue protein sequence, read N- to C-terminus: Protein aq_1444 (195 aa).

An AMMECR1 domain is found at 1–191 (MDIRELVHLG…EKEPFGEVER (191 aa)).

This Aquifex aeolicus (strain VF5) protein is Protein aq_1444.